Here is a 128-residue protein sequence, read N- to C-terminus: L-ectoine synthase (128 aa).

Belongs to the ectoine synthase family.

It catalyses the reaction (2S)-4-acetamido-2-aminobutanoate = L-ectoine + H2O. Its pathway is amine and polyamine biosynthesis; ectoine biosynthesis; L-ectoine from L-aspartate 4-semialdehyde: step 3/3. In terms of biological role, catalyzes the circularization of gamma-N-acetyl-alpha,gamma-diaminobutyric acid (ADABA) to ectoine (1,4,5,6-tetrahydro-2-methyl-4-pyrimidine carboxylic acid), which is an excellent osmoprotectant. This chain is L-ectoine synthase, found in Virgibacillus pantothenticus.